A 97-amino-acid polypeptide reads, in one-letter code: Small ribosomal subunit protein uS17 (97 aa).

The disordered stretch occupies residues 1–20; it reads MSEATVNDNAAVKNEKGARK.

Belongs to the universal ribosomal protein uS17 family. As to quaternary structure, part of the 30S ribosomal subunit.

Functionally, one of the primary rRNA binding proteins, it binds specifically to the 5'-end of 16S ribosomal RNA. The polypeptide is Small ribosomal subunit protein uS17 (Corynebacterium jeikeium (strain K411)).